The sequence spans 59 residues: Dimethylamine corrinoid protein (59 aa).

The B12-binding domain maps to 1–59; sequence TLQGQKDVIELLKEEGLRDKIKVMVGGAPATQAWADKIGADCYAENASEAVAKAKELLA.

The protein belongs to the methylamine corrinoid protein family.

It functions in the pathway one-carbon metabolism; methanogenesis from dimethylamine. In terms of biological role, acts as a methyl group carrier between MtbB and MtbA. The polypeptide is Dimethylamine corrinoid protein (mtbC) (Methanosarcina thermophila).